A 310-amino-acid chain; its full sequence is Putative S-adenosyl-L-methionine-dependent methyltransferase Franean1_4929 (310 aa).

Positions 1–28 are disordered; sequence MSRPSAPRGRTELRSIHERGHERGSAGV. The segment covering 9 to 24 has biased composition (basic and acidic residues); sequence GRTELRSIHERGHERG. S-adenosyl-L-methionine contacts are provided by residues Asp-136 and 165–166; that span reads DL.

This sequence belongs to the UPF0677 family.

Its function is as follows. Exhibits S-adenosyl-L-methionine-dependent methyltransferase activity. The polypeptide is Putative S-adenosyl-L-methionine-dependent methyltransferase Franean1_4929 (Parafrankia sp. (strain EAN1pec)).